The following is a 98-amino-acid chain: NADH-ubiquinone oxidoreductase chain 4L (98 aa).

3 consecutive transmembrane segments (helical) span residues 1–21 (MMSI…GVLI), 28–48 (STLL…ALLI), and 59–79 (APLI…ALLV).

The protein belongs to the complex I subunit 4L family. As to quaternary structure, core subunit of respiratory chain NADH dehydrogenase (Complex I) which is composed of 45 different subunits.

Its subcellular location is the mitochondrion inner membrane. The catalysed reaction is a ubiquinone + NADH + 5 H(+)(in) = a ubiquinol + NAD(+) + 4 H(+)(out). In terms of biological role, core subunit of the mitochondrial membrane respiratory chain NADH dehydrogenase (Complex I) which catalyzes electron transfer from NADH through the respiratory chain, using ubiquinone as an electron acceptor. Part of the enzyme membrane arm which is embedded in the lipid bilayer and involved in proton translocation. This is NADH-ubiquinone oxidoreductase chain 4L (MT-ND4L) from Lagorchestes hirsutus (Rufous hare-wallaby).